Consider the following 260-residue polypeptide: 4-hydroxy-tetrahydrodipicolinate reductase (260 aa).

Gly12 to Met17 provides a ligand contact to NAD(+). Lys40 contacts NADP(+). Residues Gly92 to Thr94 and Ala118 to Phe121 contribute to the NAD(+) site. Residue His148 is the Proton donor/acceptor of the active site. His149 contacts (S)-2,3,4,5-tetrahydrodipicolinate. Residue Lys152 is the Proton donor of the active site. Gly158–Thr159 lines the (S)-2,3,4,5-tetrahydrodipicolinate pocket.

The protein belongs to the DapB family.

The protein localises to the cytoplasm. It catalyses the reaction (S)-2,3,4,5-tetrahydrodipicolinate + NAD(+) + H2O = (2S,4S)-4-hydroxy-2,3,4,5-tetrahydrodipicolinate + NADH + H(+). It carries out the reaction (S)-2,3,4,5-tetrahydrodipicolinate + NADP(+) + H2O = (2S,4S)-4-hydroxy-2,3,4,5-tetrahydrodipicolinate + NADPH + H(+). It participates in amino-acid biosynthesis; L-lysine biosynthesis via DAP pathway; (S)-tetrahydrodipicolinate from L-aspartate: step 4/4. In terms of biological role, catalyzes the conversion of 4-hydroxy-tetrahydrodipicolinate (HTPA) to tetrahydrodipicolinate. This Lactococcus lactis subsp. lactis (strain IL1403) (Streptococcus lactis) protein is 4-hydroxy-tetrahydrodipicolinate reductase.